Reading from the N-terminus, the 323-residue chain is Ferrochelatase (323 aa).

Fe cation contacts are provided by histidine 196 and glutamate 277.

This sequence belongs to the ferrochelatase family.

The protein resides in the cytoplasm. The enzyme catalyses heme b + 2 H(+) = protoporphyrin IX + Fe(2+). It functions in the pathway porphyrin-containing compound metabolism; protoheme biosynthesis; protoheme from protoporphyrin-IX: step 1/1. Catalyzes the ferrous insertion into protoporphyrin IX. The sequence is that of Ferrochelatase from Haemophilus influenzae (strain ATCC 51907 / DSM 11121 / KW20 / Rd).